The chain runs to 166 residues: UPF0304 protein VF_1794 (166 aa).

Belongs to the UPF0304 family.

The polypeptide is UPF0304 protein VF_1794 (Aliivibrio fischeri (strain ATCC 700601 / ES114) (Vibrio fischeri)).